The primary structure comprises 356 residues: Phosphate acyltransferase (356 aa).

Belongs to the PlsX family. Homodimer. Probably interacts with PlsY.

The protein resides in the cytoplasm. It catalyses the reaction a fatty acyl-[ACP] + phosphate = an acyl phosphate + holo-[ACP]. Its pathway is lipid metabolism; phospholipid metabolism. Its function is as follows. Catalyzes the reversible formation of acyl-phosphate (acyl-PO(4)) from acyl-[acyl-carrier-protein] (acyl-ACP). This enzyme utilizes acyl-ACP as fatty acyl donor, but not acyl-CoA. The protein is Phosphate acyltransferase of Shigella sonnei (strain Ss046).